We begin with the raw amino-acid sequence, 75 residues long: Kappa-thalatoxin-Tas2a (75 aa).

The signal sequence occupies residues 1-22 (MKFQMIAAVLLIAFCLSVVVTA). A propeptide spanning residues 23-40 (RMELQDDEEMKNGSFQKR) is cleaved from the precursor. The 33-residue stretch at 43-75 (CIDTIPKSRCTAFQCKHSMKYRLSFCRKTCGTC) folds into the ShKT domain. Intrachain disulfides connect cysteine 43–cysteine 75, cysteine 52–cysteine 68, and cysteine 57–cysteine 72.

Belongs to the sea anemone type 1 potassium channel toxin family. Type 1a subfamily.

The protein resides in the secreted. It localises to the nematocyst. Its function is as follows. Inhibits voltage-gated potassium channels (Kv) with higher potency for Kv1.1/KCNA1 and Kv1.3/KCNA3 (IC(50)=3.4 nM). The sequence is that of Kappa-thalatoxin-Tas2a from Thalassianthus aster (Fuzzy-tipped anemone).